We begin with the raw amino-acid sequence, 226 residues long: PKHD-type hydroxylase Sfri_0612 (226 aa).

Residues 77-177 (KIFPPCFNRY…RIAAITWMQS (101 aa)) enclose the Fe2OG dioxygenase domain. Fe cation contacts are provided by H95, D97, and H158. R168 provides a ligand contact to 2-oxoglutarate.

The cofactor is Fe(2+). L-ascorbate is required as a cofactor.

The protein is PKHD-type hydroxylase Sfri_0612 of Shewanella frigidimarina (strain NCIMB 400).